A 312-amino-acid chain; its full sequence is Malate dehydrogenase (312 aa).

Residues 12–17 (GAGFTG) and Asp-36 each bind NAD(+). Substrate is bound by residues Arg-87 and Arg-93. Residues Asn-100 and 123 to 125 (LTN) contribute to the NAD(+) site. Residue Asn-125 participates in substrate binding. Ser-149 carries the phosphoserine modification. Arg-156 lines the substrate pocket. His-180 functions as the Proton acceptor in the catalytic mechanism.

Belongs to the LDH/MDH superfamily. MDH type 3 family.

The enzyme catalyses (S)-malate + NAD(+) = oxaloacetate + NADH + H(+). Its function is as follows. Catalyzes the reversible oxidation of malate to oxaloacetate. This Geobacillus kaustophilus (strain HTA426) protein is Malate dehydrogenase.